The sequence spans 246 residues: Chalcone--flavanone isomerase 1 (246 aa).

Residues Thr59, Asn124, and Ser201 each contribute to the substrate site.

The protein belongs to the chalcone isomerase family. As to expression, mostly expressed in siliques and flowers, and, to a lower extent, in leaves.

The catalysed reaction is a chalcone = a flavanone.. Its pathway is secondary metabolite biosynthesis; flavonoid biosynthesis. In terms of biological role, catalyzes the intramolecular cyclization of bicyclic chalcones into tricyclic (S)-flavanones. Responsible for the isomerization of 4,2',4',6'-tetrahydroxychalcone (also termed chalcone) into naringenin. This chain is Chalcone--flavanone isomerase 1 (CHI1), found in Arabidopsis thaliana (Mouse-ear cress).